The sequence spans 234 residues: Putative gustatory receptor clone PTE38 (234 aa).

The helical transmembrane segment at 1–11 (MYLFFSNLSFN) threads the bilayer. At 12–42 (DICIITTTIPKMLMNVQSHDQSITYLGCLSQ) the chain is on the extracellular side. An intrachain disulfide couples Cys39 to Cys121. A helical transmembrane segment spans residues 43 to 62 (VYLIVNFGSIESCLLAVMAY). At 63-84 (DRYVAICHPLKYTVIMNHYFCV) the chain is on the cytoplasmic side. Residues 85-105 (MLLLFACSLALHMCLFHILMV) form a helical membrane-spanning segment. Topologically, residues 106 to 138 (LILTFCTKTEIPHFFCELAHIIKLTCSDNFINY) are extracellular. The chain crosses the membrane as a helical span at residues 139 to 160 (LLIYTVSVLFFGVHIVGIILSY). Residues 161 to 182 (IYTVSSVLRMSLLGGMYKAFST) are Cytoplasmic-facing. A helical transmembrane segment spans residues 183-202 (CGSHLSVVSLFYGTGFGVHI). Residues 203-212 (SSPLTDSPRK) lie on the Extracellular side of the membrane. Residues 213–234 (TVVASVMYTVVTQMHGPFIYSL) form a helical membrane-spanning segment.

The protein belongs to the G-protein coupled receptor 1 family. Tongue specific.

It localises to the cell membrane. Its function is as follows. Possible taste receptor. This chain is Putative gustatory receptor clone PTE38, found in Rattus norvegicus (Rat).